The primary structure comprises 64 residues: Conotoxin Im11.2 (64 aa).

The first 26 residues, 1-26, serve as a signal peptide directing secretion; sequence MMFRLTSVSCFLLVIVCLNLVVLTNA. Intrachain disulfides connect Cys-27–Cys-41, Cys-34–Cys-46, Cys-40–Cys-50, and Cys-45–Cys-54. Asp-57 is subject to Aspartic acid 1-amide. The propeptide occupies 61–64; it reads ATFQ.

It belongs to the conotoxin I2 superfamily. Expressed by the venom duct.

Its subcellular location is the secreted. This chain is Conotoxin Im11.2, found in Conus imperialis (Imperial cone).